The sequence spans 185 residues: HTH-type transcriptional regulator SAB2452 (185 aa).

The HTH tetR-type domain maps to 6–66; it reads IENRQRIEEI…YVIQRDLNTF (61 aa). The H-T-H motif DNA-binding region spans 29–48; the sequence is SMNRIAKELGIGMGTLYRHF.

This Staphylococcus aureus (strain bovine RF122 / ET3-1) protein is HTH-type transcriptional regulator SAB2452.